The following is a 21-amino-acid chain: Protein IroK (21 aa).

Its function is as follows. Possible increased expression of this protein (due to mutations upstream of the start codon) is proposed to be responsible for resistance to 3-hydroxypropionic acid (3-HP). This is Protein IroK (iroK) from Escherichia coli (strain K12).